The primary structure comprises 445 residues: Phosphoglucosamine mutase (445 aa).

The active-site Phosphoserine intermediate is the Ser102. Mg(2+)-binding residues include Ser102, Asp241, Asp243, and Asp245. Phosphoserine is present on Ser102.

The protein belongs to the phosphohexose mutase family. Mg(2+) is required as a cofactor. Post-translationally, activated by phosphorylation.

The catalysed reaction is alpha-D-glucosamine 1-phosphate = D-glucosamine 6-phosphate. In terms of biological role, catalyzes the conversion of glucosamine-6-phosphate to glucosamine-1-phosphate. In Variovorax paradoxus (strain S110), this protein is Phosphoglucosamine mutase.